A 511-amino-acid polypeptide reads, in one-letter code: ATP synthase subunit alpha 2 (511 aa).

173 to 180 contributes to the ATP binding site; the sequence is GDRQTGKS.

It belongs to the ATPase alpha/beta chains family. As to quaternary structure, F-type ATPases have 2 components, CF(1) - the catalytic core - and CF(0) - the membrane proton channel. CF(1) has five subunits: alpha(3), beta(3), gamma(1), delta(1), epsilon(1). CF(0) has three main subunits: a(1), b(2) and c(9-12). The alpha and beta chains form an alternating ring which encloses part of the gamma chain. CF(1) is attached to CF(0) by a central stalk formed by the gamma and epsilon chains, while a peripheral stalk is formed by the delta and b chains.

It localises to the cell inner membrane. The enzyme catalyses ATP + H2O + 4 H(+)(in) = ADP + phosphate + 5 H(+)(out). Functionally, produces ATP from ADP in the presence of a proton gradient across the membrane. The alpha chain is a regulatory subunit. The chain is ATP synthase subunit alpha 2 from Nitrosospira multiformis (strain ATCC 25196 / NCIMB 11849 / C 71).